A 291-amino-acid chain; its full sequence is MNMIWRNSISCLRLGKVPHRYQSGYHPVAPLGSRILTDPAKVFEHNMWDHMQWSKEEEAAARKKVKENSAVRVLLEEQVKYEREASKYWDTFYKIHKNKFFKDRNWLLREFPEILPVDQKPEEKARESSWDHVKTSATNRFSRMHCPTVPDEKNHYEKSSGSSEGQSKTESDFSNLDSEKHKKGPMETGLFPGSNATFRILEVGCGAGNSVFPILNTLENSPESFLYCCDFASGAVELVKSHSSYRATQCFAFVHDVCDDGLPYPFPDGILDVILLVFVLSSIHPDRTLFI.

Residues Met1–Tyr21 constitute a mitochondrion transit peptide. Lys80 participates in a covalent cross-link: Glycyl lysine isopeptide (Lys-Gly) (interchain with G-Cter in SUMO). The S-adenosyl-L-methionine site is built by Trp89 and Tyr93. The segment at Phe141 to Glu187 is disordered. Over residues Ser159 to Lys168 the composition is skewed to low complexity. Residues Gly204, Asp230, and Asp256 each coordinate S-adenosyl-L-methionine.

The protein belongs to the methyltransferase superfamily. METL family. Interacts with EP300.

Its subcellular location is the mitochondrion. The enzyme catalyses cytidine(32) in tRNA(Ser) + S-adenosyl-L-methionine = N(3)-methylcytidine(32) in tRNA(Ser) + S-adenosyl-L-homocysteine + H(+). It carries out the reaction cytidine(32) in tRNA(Thr) + S-adenosyl-L-methionine = N(3)-methylcytidine(32) in tRNA(Thr) + S-adenosyl-L-homocysteine + H(+). The catalysed reaction is a cytidine in mRNA + S-adenosyl-L-methionine = an N(3)-methylcytidine in mRNA + S-adenosyl-L-homocysteine + H(+). Mitochondrial S-adenosyl-L-methionine-dependent methyltransferase that mediates N(3)-methylcytidine modification of residue 32 of the tRNA anticodon loop of mitochondrial tRNA(Ser)(UCN) and tRNA(Thr). N(3)-methylcytidine methylation modification regulates mitochondrial translation efficiency and is required for activity of the respiratory chain. N(3)-methylcytidine methylation of mitochondrial tRNA(Ser)(UCN) requires the formation of N(6)-dimethylallyladenosine(37) (i6A37) by TRIT1 as prerequisite. May also mediate N(3)-methylcytidine modification of mRNAs. The existence of N(3)-methylcytidine modification on mRNAs is however unclear, and additional evidences are required to confirm the role of the N(3)-methylcytidine-specific mRNA methyltransferase activity of METTL8 in vivo. This Homo sapiens (Human) protein is tRNA N(3)-cytidine methyltransferase METTL8, mitochondrial.